A 224-amino-acid polypeptide reads, in one-letter code: 7-cyano-7-deazaguanine synthase (224 aa).

8 to 18 (VSGGADSATVL) is a binding site for ATP. 4 residues coordinate Zn(2+): Cys-189, Cys-199, Cys-202, and Cys-205.

It belongs to the QueC family. The cofactor is Zn(2+).

It catalyses the reaction 7-carboxy-7-deazaguanine + NH4(+) + ATP = 7-cyano-7-deazaguanine + ADP + phosphate + H2O + H(+). It participates in purine metabolism; 7-cyano-7-deazaguanine biosynthesis. Its function is as follows. Catalyzes the ATP-dependent conversion of 7-carboxy-7-deazaguanine (CDG) to 7-cyano-7-deazaguanine (preQ(0)). The chain is 7-cyano-7-deazaguanine synthase from Rickettsia felis (strain ATCC VR-1525 / URRWXCal2) (Rickettsia azadi).